We begin with the raw amino-acid sequence, 371 residues long: Aspartate-semialdehyde dehydrogenase (371 aa).

NADP(+) contacts are provided by residues 9–12 (RGMV), 37–38 (TS), and Gln73. Residue Arg102 participates in phosphate binding. Cys135 serves as the catalytic Acyl-thioester intermediate. Gln162 contributes to the substrate binding site. NADP(+) contacts are provided by residues 165 to 166 (SG) and Pro193. Glu241 contacts substrate. Residue Lys244 participates in phosphate binding. Substrate is bound at residue Arg268. His275 acts as the Proton acceptor in catalysis. Position 351 (Gln351) interacts with NADP(+).

Belongs to the aspartate-semialdehyde dehydrogenase family. In terms of assembly, homodimer.

The catalysed reaction is L-aspartate 4-semialdehyde + phosphate + NADP(+) = 4-phospho-L-aspartate + NADPH + H(+). Its pathway is amino-acid biosynthesis; L-lysine biosynthesis via DAP pathway; (S)-tetrahydrodipicolinate from L-aspartate: step 2/4. It functions in the pathway amino-acid biosynthesis; L-methionine biosynthesis via de novo pathway; L-homoserine from L-aspartate: step 2/3. It participates in amino-acid biosynthesis; L-threonine biosynthesis; L-threonine from L-aspartate: step 2/5. In terms of biological role, catalyzes the NADPH-dependent formation of L-aspartate-semialdehyde (L-ASA) by the reductive dephosphorylation of L-aspartyl-4-phosphate. The sequence is that of Aspartate-semialdehyde dehydrogenase from Neisseria meningitidis serogroup B (strain ATCC BAA-335 / MC58).